Reading from the N-terminus, the 210-residue chain is dTTP/UTP pyrophosphatase (210 aa).

The active-site Proton acceptor is the D89.

It belongs to the Maf family. YhdE subfamily. A divalent metal cation serves as cofactor.

It localises to the cytoplasm. The enzyme catalyses dTTP + H2O = dTMP + diphosphate + H(+). It carries out the reaction UTP + H2O = UMP + diphosphate + H(+). Nucleoside triphosphate pyrophosphatase that hydrolyzes dTTP and UTP. May have a dual role in cell division arrest and in preventing the incorporation of modified nucleotides into cellular nucleic acids. This Burkholderia thailandensis (strain ATCC 700388 / DSM 13276 / CCUG 48851 / CIP 106301 / E264) protein is dTTP/UTP pyrophosphatase.